We begin with the raw amino-acid sequence, 164 residues long: Interferon gamma (164 aa).

The first 19 residues, 1–19 (MTCQTYNLFVLSVIMIYYG), serve as a signal peptide directing secretion. N-linked (GlcNAc...) asparagine glycans are attached at residues N42 and N61.

The protein belongs to the type II (or gamma) interferon family. Homodimer.

It is found in the secreted. Its function is as follows. Produced by lymphocytes activated by specific antigens or mitogens. IFN-gamma, in addition to having antiviral activity, has important immunoregulatory functions. It is a potent activator of macrophages, it has antiproliferative effects on transformed cells and it can potentiate the antiviral and antitumor effects of the type I interferons. The chain is Interferon gamma (IFNG) from Gallus gallus (Chicken).